Reading from the N-terminus, the 164-residue chain is Crossover junction endodeoxyribonuclease RuvC (164 aa).

Active-site residues include Asp7, Glu67, and Asp139. Positions 7, 67, and 139 each coordinate Mg(2+).

It belongs to the RuvC family. Homodimer which binds Holliday junction (HJ) DNA. The HJ becomes 2-fold symmetrical on binding to RuvC with unstacked arms; it has a different conformation from HJ DNA in complex with RuvA. In the full resolvosome a probable DNA-RuvA(4)-RuvB(12)-RuvC(2) complex forms which resolves the HJ. Requires Mg(2+) as cofactor.

The protein resides in the cytoplasm. It carries out the reaction Endonucleolytic cleavage at a junction such as a reciprocal single-stranded crossover between two homologous DNA duplexes (Holliday junction).. In terms of biological role, the RuvA-RuvB-RuvC complex processes Holliday junction (HJ) DNA during genetic recombination and DNA repair. Endonuclease that resolves HJ intermediates. Cleaves cruciform DNA by making single-stranded nicks across the HJ at symmetrical positions within the homologous arms, yielding a 5'-phosphate and a 3'-hydroxyl group; requires a central core of homology in the junction. The consensus cleavage sequence is 5'-(A/T)TT(C/G)-3'. Cleavage occurs on the 3'-side of the TT dinucleotide at the point of strand exchange. HJ branch migration catalyzed by RuvA-RuvB allows RuvC to scan DNA until it finds its consensus sequence, where it cleaves and resolves the cruciform DNA. The chain is Crossover junction endodeoxyribonuclease RuvC from Geobacter metallireducens (strain ATCC 53774 / DSM 7210 / GS-15).